The chain runs to 343 residues: MSEPNTPLHAQPNEQLDLNNLNDLDEKDIDDLNLDPNSDVEISADSGDVVNSNIDNVIWQRNCNKKRRYHTPEFNDVYNETNNTINDVTMLDDVDDFQPRINVSSPFSSATKLSELLPNDHNGTSHPRRLSMSQQSKFISYVDDQLLQIQRKFVQSRGLNIKNGYASLTPLLQDLKTLVDFVWYSIAHVPNSDYLLQSEEKRHCPDSRNPKDTCGYSSYFGQGSYLIKIADDLIDYVEKFTFKNMEDSEINDTLSKLFKLFFILDRIFVILTDDNDNCKEVPKTSSASKNIAGLNGTDIVRLKGIAERTRVRLPIFLESQGIHGYHYELSKIYEGFLDHANSF.

The residue at position 69 (Y69) is a Phosphotyrosine. Residues T71 and T84 each carry the phosphothreonine modification. S104, S105, S108, and S342 each carry phosphoserine.

In terms of assembly, component of the general transcription factor TFIIH, composed of a 7-subunit TFIIH core complex composed of XPB/SSL2, XPD/RAD3, SSL1, TFB1, TFB2, TFB4 and TFB5 which is active in NER; the 3-subunit CTD-kinase module TFIIK composed of CCL1, KIN28, and TFB3 which is active in transcription; as well as TFB6 that regulates SSL2 association with the complex. In terms of processing, phosphorylation leads the dissociation of from SSL2.

Its subcellular location is the cytoplasm. It is found in the nucleus. In terms of biological role, component of the general transcription and DNA repair factor IIH (TFIIH) core complex, which is involved in general and transcription-coupled nucleotide excision repair (NER) of damaged DNA and, when complexed to TFIIK, in RNA transcription by RNA polymerase II. In NER, TFIIH acts by opening DNA around the lesion to allow the excision of the damaged oligonucleotide and its replacement by a new DNA fragment. In transcription, TFIIH has an essential role in transcription initiation. When the pre-initiation complex (PIC) has been established, TFIIH is required for promoter opening and promoter escape. Phosphorylation of the C-terminal tail (CTD) of the largest subunit of RNA polymerase II by the kinase module TFIIK controls the initiation of transcription. TFB6 facilitates dissociation of the SSL2 helicase from TFIIH after transcription initiation. This chain is General transcription and DNA repair factor IIH subunit TFB6, found in Saccharomyces cerevisiae (strain ATCC 204508 / S288c) (Baker's yeast).